Reading from the N-terminus, the 185-residue chain is Pericyclase pydY (185 aa).

The protein belongs to the pericyclase pydY family.

The protein operates within mycotoxin biosynthesis. Its function is as follows. Pericyclase; part of the gene cluster that mediates the biosynthesis of pyrrocidines, fungal natural products containing a macrocyclic para-cyclophane connected to a decahydrofluorene ring system that show potent antibiotic activities toward Gram-negative bacteria. Within the pathway, pydY is involved in the late Diels-Alder cycloaddition step that leads to the formation of the decahydrofluorene core. The pathway begins with the PKS-NRPS pydA which, with the help of the trans-enoyl reductase pydC, synthesizes the polyketide-tyrosyl acyl thioester product which can be reductively off-loaded by the terminal reductase (R) domain in pydA. The alpha/beta hydrolase pydG is then required to catalyze the subsequent Knoevenagel condensation that affords the 3-pyrrolin-2-one ring, whereas the four proteins pydB, pydE, pydX and pydZ then function synergistically to form the cyclophane. PydB and the membrane-bound pydX and pydZ are lipid-binding proteins that can sequester and mold the pdyG product into the inverse S-shape. Binding of the medium chain reductase pydE to the complex would trigger the cascade oxidative cyclization. PydY is involved in the Diels-Alder cycloaddition that forms the decahydrofluorene core. Additional non-enzymatic hydroxylation yields pyrrocidine A2 which can be further reduced into pyrrocidine B by an endogenous reductase. The sequence is that of Pericyclase pydY from Acremonium sp.